Here is a 530-residue protein sequence, read N- to C-terminus: ATP synthase subunit alpha 3 (530 aa).

Residue 174-181 (GDRATGKT) participates in ATP binding. A compositionally biased stretch (low complexity) spans 507–522 (TASATAPPDPPAASAA). The segment at 507 to 530 (TASATAPPDPPAASAAELPQPDSP) is disordered.

The protein belongs to the ATPase alpha/beta chains family. F-type ATPases have 2 components, CF(1) - the catalytic core - and CF(0) - the membrane proton channel. CF(1) has five subunits: alpha(3), beta(3), gamma(1), delta(1), epsilon(1). CF(0) has three main subunits: a(1), b(2) and c(9-12). The alpha and beta chains form an alternating ring which encloses part of the gamma chain. CF(1) is attached to CF(0) by a central stalk formed by the gamma and epsilon chains, while a peripheral stalk is formed by the delta and b chains.

It localises to the cell inner membrane. The catalysed reaction is ATP + H2O + 4 H(+)(in) = ADP + phosphate + 5 H(+)(out). Produces ATP from ADP in the presence of a proton gradient across the membrane. The alpha chain is a regulatory subunit. The protein is ATP synthase subunit alpha 3 of Paraburkholderia xenovorans (strain LB400).